Consider the following 509-residue polypeptide: Methionine--tRNA ligase (509 aa).

The 'HIGH' region signature appears at 12-22 (YYPSGDLHLGH). Positions 302-306 (KMSKS) match the 'KMSKS' region motif. Lysine 305 is an ATP binding site.

This sequence belongs to the class-I aminoacyl-tRNA synthetase family. MetG type 2B subfamily. As to quaternary structure, monomer.

The protein localises to the cytoplasm. The enzyme catalyses tRNA(Met) + L-methionine + ATP = L-methionyl-tRNA(Met) + AMP + diphosphate. In terms of biological role, is required not only for elongation of protein synthesis but also for the initiation of all mRNA translation through initiator tRNA(fMet) aminoacylation. The polypeptide is Methionine--tRNA ligase (metG) (Mycoplasmopsis pulmonis (strain UAB CTIP) (Mycoplasma pulmonis)).